We begin with the raw amino-acid sequence, 98 residues long: NADH-ubiquinone oxidoreductase chain 4L (98 aa).

The next 3 membrane-spanning stretches (helical) occupy residues 1 to 21, 29 to 49, and 61 to 81; these read MSLVYMNIMTAFMVSLAGLLM, SLLCLEGMMLSLFVLATLTIL, and IILLVFAACEAALGLSLLVMV.

Belongs to the complex I subunit 4L family. In terms of assembly, core subunit of respiratory chain NADH dehydrogenase (Complex I) which is composed of 45 different subunits.

It is found in the mitochondrion inner membrane. It carries out the reaction a ubiquinone + NADH + 5 H(+)(in) = a ubiquinol + NAD(+) + 4 H(+)(out). Core subunit of the mitochondrial membrane respiratory chain NADH dehydrogenase (Complex I) which catalyzes electron transfer from NADH through the respiratory chain, using ubiquinone as an electron acceptor. Part of the enzyme membrane arm which is embedded in the lipid bilayer and involved in proton translocation. This chain is NADH-ubiquinone oxidoreductase chain 4L (MT-ND4L), found in Muntiacus feae (Fea's muntjac).